Reading from the N-terminus, the 537-residue chain is CTP synthase (537 aa).

The segment at 1 to 269 is amidoligase domain; that stretch reads MNQTKYIFVT…DVVALKKLDL (269 aa). CTP is bound at residue serine 15. Position 15 (serine 15) interacts with UTP. 16-21 contributes to the ATP binding site; the sequence is SLGKGI. Tyrosine 56 provides a ligand contact to L-glutamine. Aspartate 73 serves as a coordination point for ATP. Mg(2+) contacts are provided by aspartate 73 and glutamate 143. CTP is bound by residues 150-152, 190-195, and lysine 226; these read DIE and KTKPTQ. UTP is bound by residues 190–195 and lysine 226; that span reads KTKPTQ. In terms of domain architecture, Glutamine amidotransferase type-1 spans 295–537; the sequence is NIGLVGKYVE…VAAAVNAHKK (243 aa). Glycine 357 is a binding site for L-glutamine. The active-site Nucleophile; for glutamine hydrolysis is the cysteine 384. L-glutamine-binding positions include 385-388, glutamate 408, and arginine 465; that span reads LGMQ. Residues histidine 510 and glutamate 512 contribute to the active site.

Belongs to the CTP synthase family. Homotetramer.

It catalyses the reaction UTP + L-glutamine + ATP + H2O = CTP + L-glutamate + ADP + phosphate + 2 H(+). It carries out the reaction L-glutamine + H2O = L-glutamate + NH4(+). The catalysed reaction is UTP + NH4(+) + ATP = CTP + ADP + phosphate + 2 H(+). It participates in pyrimidine metabolism; CTP biosynthesis via de novo pathway; CTP from UDP: step 2/2. Its activity is regulated as follows. Allosterically activated by GTP, when glutamine is the substrate; GTP has no effect on the reaction when ammonia is the substrate. The allosteric effector GTP functions by stabilizing the protein conformation that binds the tetrahedral intermediate(s) formed during glutamine hydrolysis. Inhibited by the product CTP, via allosteric rather than competitive inhibition. Catalyzes the ATP-dependent amination of UTP to CTP with either L-glutamine or ammonia as the source of nitrogen. Regulates intracellular CTP levels through interactions with the four ribonucleotide triphosphates. The protein is CTP synthase of Flavobacterium johnsoniae (strain ATCC 17061 / DSM 2064 / JCM 8514 / BCRC 14874 / CCUG 350202 / NBRC 14942 / NCIMB 11054 / UW101) (Cytophaga johnsonae).